The primary structure comprises 221 residues: Small ribosomal subunit protein uS5 (221 aa).

Positions 46-109 (LKDEVIDIKR…INAKLNIMEI (64 aa)) constitute an S5 DRBM domain.

Belongs to the universal ribosomal protein uS5 family. In terms of assembly, part of the 30S ribosomal subunit. Contacts protein S4.

With S4 and S12 plays an important role in translational accuracy. This Thermoplasma acidophilum (strain ATCC 25905 / DSM 1728 / JCM 9062 / NBRC 15155 / AMRC-C165) protein is Small ribosomal subunit protein uS5.